The primary structure comprises 421 residues: Divalent metal cation transporter MntH (421 aa).

11 consecutive transmembrane segments (helical) span residues 27–47 (LGPAFIVSVAYVDPGNFATNI), 51–71 (SLFDYHLIWVILWSNVIAIFL), 100–120 (WFLWITAELAAMATDLAEFLG), 128–148 (LFHIPMTYAAFLTGVVTFAIV), 160–180 (GIIFGLVAVISLAYAFELFIA), 201–221 (AMLIAVGILGATVMPHVIYLH), 248–268 (ILVAMNTAFIINAAMLIVSAA), 289–309 (PLLGVFSSWAFGIALLASGFS), 337–357 (LVTMVPAITIIALGIDPLKSL), 358–378 (IVSQVVLSFELPMAIIPLLLI), and 396–416 (IMGVLVASFVMILNGLLLYLT).

Belongs to the NRAMP family.

Its subcellular location is the cell membrane. H(+)-stimulated, divalent metal cation uptake system. This Caldanaerobacter subterraneus subsp. tengcongensis (strain DSM 15242 / JCM 11007 / NBRC 100824 / MB4) (Thermoanaerobacter tengcongensis) protein is Divalent metal cation transporter MntH.